We begin with the raw amino-acid sequence, 51 residues long: Ribosome biogenesis protein Nop10 (51 aa).

The protein belongs to the NOP10 family.

Involved in ribosome biogenesis; more specifically in 18S rRNA pseudouridylation and in cleavage of pre-rRNA. This chain is Ribosome biogenesis protein Nop10, found in Nitrosopumilus maritimus (strain SCM1).